The sequence spans 61 residues: Probable tautomerase BA_5626/GBAA_5626/BAS5226 (61 aa).

The Proton acceptor; via imino nitrogen role is filled by Pro-2.

It belongs to the 4-oxalocrotonate tautomerase family.

This Bacillus anthracis protein is Probable tautomerase BA_5626/GBAA_5626/BAS5226.